A 618-amino-acid chain; its full sequence is Ubiquitin carboxyl-terminal hydrolase 2 (618 aa).

A necessary for interaction with MDM4 region spans residues Met-1–Glu-213. 2 disordered regions span residues Val-54 to Gly-112 and Arg-246 to Lys-274. Over residues Lys-90–Glu-100 the composition is skewed to basic and acidic residues. Residues Gly-255–Lys-274 are compositionally biased toward polar residues. Residues Ala-280–Ala-612 form the USP domain. The active-site Nucleophile is Cys-289. A necessary for interaction with MDM4 region spans residues Tyr-416 to Lys-516. 4 residues coordinate Zn(2+): Cys-438, Cys-441, Cys-489, and Cys-492. His-570 serves as the catalytic Proton acceptor.

The protein belongs to the peptidase C19 family. USP2 subfamily. Homooligomer. Found in trimeric complex with MDM2 and MDM4 and USP2. Interacts with CCND1; the interaction is direct and promotes its stabilization by antagonizing ubiquitin-dependent degradation. Interacts (via N-terminus and C-terminus) with MDM2. Interacts with MDM4. Interacts with PER1. Interacts with KCNQ1; counteracts the NEDD4L-specific down-regulation of I(Ks) and restores plasma membrane localization of KCNQ1. Isoform 4: Interacts with NHERF4 and CLTC. Expressed in mesangial cells of the kidney. Isoform 1 and isoform 2 are expressed in elongated spermatids; the shorter form appearing earlier than the longer form (at protein level). Isoform 1 and isoform 2 are expressed in early round spermatids of the testis. Isoform 1 is expressed in muscle and heart. Isoform 2 is expressed in muscle, lung, heart, brain, liver and ovary. During muscle differentiation, isoform 1 expression increases before the onset of membrane fusion and decreases as the myogenic processes proceeded; un counterpart, isoform 2 expression remains low until the burst of membrane fusion but increases thereafter.

It localises to the cytoplasm. It is found in the perinuclear region. The protein localises to the nucleus. Its subcellular location is the membrane. The catalysed reaction is Thiol-dependent hydrolysis of ester, thioester, amide, peptide and isopeptide bonds formed by the C-terminal Gly of ubiquitin (a 76-residue protein attached to proteins as an intracellular targeting signal).. Its activity is regulated as follows. Cleavage is inhibited by ubiquitin in a dosage-dependent manner. Cleavage is blocked by ubiquitin aldehyde. In terms of biological role, hydrolase that deubiquitinates polyubiquitinated target proteins such as MDM2, MDM4 and CCND1. Isoform 1 and isoform 2 possess both ubiquitin-specific peptidase and isopeptidase activities. Deubiquitinates MDM2 without reversing MDM2-mediated p53/TP53 ubiquitination and thus indirectly promotes p53/TP53 degradation and limits p53 activity. Has no deubiquitinase activity against p53/TP53. Prevents MDM2-mediated degradation of MDM4. Plays a role in the G1/S cell-cycle progression in normal and cancer cells. Regulates the circadian clock by modulating its intrinsic circadian rhythm and its capacity to respond to external cues. Associates with clock proteins and deubiquitinates core clock component PER1 but does not affect its overall stability. Regulates the nucleocytoplasmic shuttling and nuclear retention of PER1 and its repressive role on the clock transcription factors CLOCK and BMAL1. Plays a role in the regulation of myogenic differentiation of embryonic muscle cells. Functionally, circadian clock output effector that regulates Ca(2+) absorption in the small intestine. Probably functions by regulating protein levels of the membrane scaffold protein NHERF4 in a rhythmic manner, and is therefore likely to control Ca(2+) membrane permeability mediated by the Ca(2+) channel TRPV6 in the intestine. In Rattus norvegicus (Rat), this protein is Ubiquitin carboxyl-terminal hydrolase 2 (Usp2).